The sequence spans 165 residues: Thiol peroxidase (165 aa).

Positions 18–165 constitute a Thioredoxin domain; the sequence is PQVGDNLAEF…DYDAALAALN (148 aa). The Cysteine sulfenic acid (-SOH) intermediate role is filled by cysteine 60. Cysteine 60 and cysteine 94 are joined by a disulfide.

Belongs to the peroxiredoxin family. Tpx subfamily. Homodimer.

The enzyme catalyses a hydroperoxide + [thioredoxin]-dithiol = an alcohol + [thioredoxin]-disulfide + H2O. Thiol-specific peroxidase that catalyzes the reduction of hydrogen peroxide and organic hydroperoxides to water and alcohols, respectively. Plays a role in cell protection against oxidative stress by detoxifying peroxides. This is Thiol peroxidase from Corynebacterium glutamicum (strain ATCC 13032 / DSM 20300 / JCM 1318 / BCRC 11384 / CCUG 27702 / LMG 3730 / NBRC 12168 / NCIMB 10025 / NRRL B-2784 / 534).